Here is a 126-residue protein sequence, read N- to C-terminus: FCS-Like Zinc finger 7 (126 aa).

The segment at 72 to 116 (SFLVNCGFCKRGLAPGRDIYMYKGDAAFCSIECREQQMEHDEGKT) adopts an FLZ-type zinc-finger fold.

The protein belongs to the FLZ family. As to quaternary structure, interacts with KIN10 and KIN11 via its FLZ-type zinc finger domain. Interacts with KINB3 via its N-terminal part. Forms homodimer and heterodimer with FLZ1, FLZ2 and FLZ15 in vitro.

Its subcellular location is the cytoplasm. The protein localises to the nucleus. May act as an adapter to facilitate the interaction of SnRK1 complex with effector proteins, conferring tissue- and stimulus-type specific differences in the SnRK1 regulation pathway. The chain is FCS-Like Zinc finger 7 from Arabidopsis thaliana (Mouse-ear cress).